The following is a 127-amino-acid chain: uncharacterized protein (127 aa).

A signal peptide spans 1–16 (MLKKIIFGITISLTTG). The N-palmitoyl cysteine moiety is linked to residue Cys17. Residue Cys17 is the site of S-diacylglycerol cysteine attachment. The stretch at 56 to 101 (EVREEIQKYRVEIVDINKKKRELYNRLSKEAQSFLAEQQKYKQKLS) forms a coiled coil. The disordered stretch occupies residues 102–127 (IPKLLIENDPKNNTANSKDNNDKDMK).

Its subcellular location is the cell membrane. This is an uncharacterized protein from Rickettsia prowazekii (strain Madrid E).